The primary structure comprises 339 residues: Deoxyhypusine hydroxylase (339 aa).

2 HEAT-like PBS-type repeats span residues 71–97 (LKHELAYCLGQTRNPDAVSYLLEVVKN) and 104–130 (CRHEAAEGLGALGFDTSLDVLKALRDD). Fe cation-binding residues include H73, E74, H106, and E107. The interval 159–183 (EKLKPSDFTSIDPAPPLPMASSQPS) is disordered. HEAT-like PBS-type repeat units lie at residues 200 to 233 (QRYRAMFALRDLASPPDLPTAVEAVEALAKGLKD), 238 to 264 (FRHEVAFVFGQLCHPASVPSLTETLSD), and 271 to 298 (VRHEAAEALGSLGDVEGVEDTLKKFLND). The Fe cation site is built by H240, E241, H273, and E274.

It belongs to the deoxyhypusine hydroxylase family. Fe(2+) is required as a cofactor.

It localises to the cytoplasm. It is found in the nucleus. It catalyses the reaction [eIF5A protein]-deoxyhypusine + AH2 + O2 = [eIF5A protein]-hypusine + A + H2O. It functions in the pathway protein modification; eIF5A hypusination. Its function is as follows. Catalyzes the hydroxylation of the N(6)-(4-aminobutyl)-L-lysine intermediate to form hypusine, an essential post-translational modification only found in mature eIF-5A factor. The polypeptide is Deoxyhypusine hydroxylase (lia1) (Aspergillus oryzae (strain ATCC 42149 / RIB 40) (Yellow koji mold)).